The chain runs to 945 residues: Leucine--tRNA ligase (945 aa).

Positions 66 to 77 match the 'HIGH' region motif; sequence PYPSGTGLHVGH. A 'KMSKS' region motif is present at residues 716-720; it reads KMGKS. Lysine 719 contributes to the ATP binding site.

It belongs to the class-I aminoacyl-tRNA synthetase family.

It localises to the cytoplasm. It catalyses the reaction tRNA(Leu) + L-leucine + ATP = L-leucyl-tRNA(Leu) + AMP + diphosphate. This Rhodococcus jostii (strain RHA1) protein is Leucine--tRNA ligase.